The primary structure comprises 116 residues: Large ribosomal subunit protein bL19 (116 aa).

This sequence belongs to the bacterial ribosomal protein bL19 family.

Its function is as follows. This protein is located at the 30S-50S ribosomal subunit interface and may play a role in the structure and function of the aminoacyl-tRNA binding site. This Actinobacillus pleuropneumoniae serotype 5b (strain L20) protein is Large ribosomal subunit protein bL19.